Consider the following 404-residue polypeptide: Homoserine O-succinyltransferase (404 aa).

Low complexity predominate over residues 1 to 25 (MTDIQADPAVTAADAAQADTSSPTA). The tract at residues 1–30 (MTDIQADPAVTAADAAQADTSSPTAHQGKP) is disordered. The region spanning 75 to 384 (NAVLICHALN…HGHDAFLLED (310 aa)) is the AB hydrolase-1 domain. The Nucleophile role is filled by S179. R249 contributes to the substrate binding site. Active-site residues include D344 and H377. D378 serves as a coordination point for substrate.

It belongs to the AB hydrolase superfamily. MetX family. In terms of assembly, homodimer.

The protein localises to the cytoplasm. It catalyses the reaction L-homoserine + succinyl-CoA = O-succinyl-L-homoserine + CoA. Its pathway is amino-acid biosynthesis; L-methionine biosynthesis via de novo pathway; O-succinyl-L-homoserine from L-homoserine: step 1/1. In terms of biological role, transfers a succinyl group from succinyl-CoA to L-homoserine, forming succinyl-L-homoserine. In Ralstonia pickettii (strain 12J), this protein is Homoserine O-succinyltransferase.